The primary structure comprises 114 residues: Large ribosomal subunit protein uL22 (114 aa).

This sequence belongs to the universal ribosomal protein uL22 family. Part of the 50S ribosomal subunit.

Its function is as follows. This protein binds specifically to 23S rRNA; its binding is stimulated by other ribosomal proteins, e.g. L4, L17, and L20. It is important during the early stages of 50S assembly. It makes multiple contacts with different domains of the 23S rRNA in the assembled 50S subunit and ribosome. In terms of biological role, the globular domain of the protein is located near the polypeptide exit tunnel on the outside of the subunit, while an extended beta-hairpin is found that lines the wall of the exit tunnel in the center of the 70S ribosome. This chain is Large ribosomal subunit protein uL22, found in Desulfitobacterium hafniense (strain Y51).